The following is a 371-amino-acid chain: Anhydro-N-acetylmuramic acid kinase (371 aa).

15–22 (GTSLDGVD) is an ATP binding site.

It belongs to the anhydro-N-acetylmuramic acid kinase family.

The enzyme catalyses 1,6-anhydro-N-acetyl-beta-muramate + ATP + H2O = N-acetyl-D-muramate 6-phosphate + ADP + H(+). Its pathway is amino-sugar metabolism; 1,6-anhydro-N-acetylmuramate degradation. It functions in the pathway cell wall biogenesis; peptidoglycan recycling. In terms of biological role, catalyzes the specific phosphorylation of 1,6-anhydro-N-acetylmuramic acid (anhMurNAc) with the simultaneous cleavage of the 1,6-anhydro ring, generating MurNAc-6-P. Is required for the utilization of anhMurNAc either imported from the medium or derived from its own cell wall murein, and thus plays a role in cell wall recycling. This is Anhydro-N-acetylmuramic acid kinase from Cereibacter sphaeroides (strain ATCC 17023 / DSM 158 / JCM 6121 / CCUG 31486 / LMG 2827 / NBRC 12203 / NCIMB 8253 / ATH 2.4.1.) (Rhodobacter sphaeroides).